We begin with the raw amino-acid sequence, 423 residues long: G protein-activated inward rectifier potassium channel 2 (423 aa).

At 1 to 89 (MAKLTESMTN…IFTTLVDLKW (89 aa)) the chain is on the cytoplasmic side. A phosphoserine mark is found at serine 16 and serine 23. A helical membrane pass occupies residues 90 to 114 (RFNLLIFVMVYTVTWLFFGMIWWLI). At 115–138 (AYIRGDMDHIEDPSWTPCVTNLNG) the chain is on the extracellular side. Positions 139-150 (FVSAFLFSIETE) form an intramembrane region, helical; Pore-forming. Positions 151–157 (TTIGYGY) form an intramembrane region, pore-forming. Positions 152–157 (TIGYGY) match the Selectivity filter motif. Residues 158–166 (RVITDKCPE) lie on the Extracellular side of the membrane. Residues 167 to 188 (GIILLLIQSVLGSIVNAFMVGC) form a helical membrane-spanning segment. Topologically, residues 189–423 (MFVKISQPKK…VANLENESKV (235 aa)) are cytoplasmic. Positions 390–423 (NQHAELETEEEEKNLEEQTERNGDVANLENESKV) are disordered. A PDZ-binding motif is present at residues 420 to 423 (ESKV).

This sequence belongs to the inward rectifier-type potassium channel (TC 1.A.2.1) family. KCNJ6 subfamily. As to quaternary structure, associates with KCNJ3/GIRK1 or KCNJ5/GRIK4 to form a G-protein-activated heteromultimer pore-forming unit. The resulting inward current is much larger. Interacts (via PDZ-binding motif) with SNX27 (via PDZ domain); the interaction is required when endocytosed to prevent degradation in lysosomes and promote recycling to the plasma membrane. In terms of tissue distribution, most abundant in cerebellum, and to a lesser degree in islets and exocrine pancreas.

It localises to the membrane. The enzyme catalyses K(+)(in) = K(+)(out). Activated by phosphatidylinositol 4,5 biphosphate (PtdIns(4,5)P2). In terms of biological role, inward rectifier potassium channels are characterized by a greater tendency to allow potassium to flow into the cell rather than out of it. Their voltage dependence is regulated by the concentration of extracellular potassium; as external potassium is raised, the voltage range of the channel opening shifts to more positive voltages. The inward rectification is mainly due to the blockage of outward current by internal magnesium. This potassium channel may be involved in the regulation of insulin secretion by glucose and/or neurotransmitters acting through G-protein-coupled receptors. The sequence is that of G protein-activated inward rectifier potassium channel 2 (KCNJ6) from Homo sapiens (Human).